The chain runs to 139 residues: Histone H2A (139 aa).

Positions M1 to A27 are disordered. S2 is modified (N-acetylserine). Residues K9 and K13 each carry the N6-acetyllysine modification. Polar residues predominate over residues E17–A27. N5-methylglutamine is present on Q110. A disordered region spans residues P119–L139. A compositionally biased stretch (basic and acidic residues) spans G129–L139. Residue S136 is modified to Phosphoserine. The short motif at S136 to Q137 is the [ST]-Q motif element.

It belongs to the histone H2A family. As to quaternary structure, the nucleosome is a histone octamer containing two molecules each of H2A, H2B, H3 and H4 assembled in one H3-H4 heterotetramer and two H2A-H2B heterodimers. The octamer wraps approximately 147 bp of DNA. Post-translationally, phosphorylated to form H2AS128ph (gamma-H2A) in response to DNA double-strand breaks (DSBs) generated by exogenous genotoxic agents and by stalled replication forks. Phosphorylation is dependent on the DNA damage checkpoint kinases MEC1/ATR and TEL1/ATM, spreads on either side of a detected DSB site and may mark the surrounding chromatin for recruitment of proteins required for DNA damage signaling and repair. Gamma-H2A is removed from the DNA prior to the strand invasion-primer extension step of the repair process and subsequently dephosphorylated. Dephosphorylation is necessary for efficient recovery from the DNA damage checkpoint. Acetylated by ESA1 to form H2AK4ac and H2AK7ac.

The protein localises to the nucleus. It localises to the chromosome. Core component of nucleosome which plays a central role in DNA double strand break (DSB) repair. Nucleosomes wrap and compact DNA into chromatin, limiting DNA accessibility to the cellular machineries which require DNA as a template. Histones thereby play a central role in transcription regulation, DNA repair, DNA replication and chromosomal stability. DNA accessibility is regulated via a complex set of post-translational modifications of histones, also called histone code, and nucleosome remodeling. This chain is Histone H2A, found in Agaricus bisporus (White button mushroom).